We begin with the raw amino-acid sequence, 823 residues long: Leucine--tRNA ligase (823 aa).

The short motif at 42–52 is the 'HIGH' region element; it reads PYPSGTLHMGH. The short motif at 575–579 is the 'KMSKS' region element; that stretch reads KMSKS. Residue Lys578 coordinates ATP.

The protein belongs to the class-I aminoacyl-tRNA synthetase family.

It localises to the cytoplasm. The enzyme catalyses tRNA(Leu) + L-leucine + ATP = L-leucyl-tRNA(Leu) + AMP + diphosphate. The polypeptide is Leucine--tRNA ligase (Legionella pneumophila (strain Corby)).